We begin with the raw amino-acid sequence, 219 residues long: Proteasome subunit beta type-9 (219 aa).

Positions 1-20 are cleaved as a propeptide — removed in mature form; it reads MLRAGAPTAGSFRTKEVHTG. Thr-21 serves as the catalytic Nucleophile. Residues Lys-53 and Lys-109 each carry the N6-acetyllysine modification.

Belongs to the peptidase T1B family. In terms of assembly, the 26S proteasome consists of a 20S proteasome core and two 19S regulatory subunits. The 20S proteasome core is composed of 28 subunits that are arranged in four stacked rings, resulting in a barrel-shaped structure. The two end rings are each formed by seven alpha subunits, and the two central rings are each formed by seven beta subunits. The catalytic chamber with the active sites is on the inside of the barrel. Component of the immunoproteasome, where it displaces the equivalent housekeeping subunit PSMB6. Component of the spermatoproteasome, a form of the proteasome specifically found in testis. Autocleaved. The resulting N-terminal Thr residue of the mature subunit is responsible for the nucleophile proteolytic activity.

Its subcellular location is the cytoplasm. The protein resides in the nucleus. It catalyses the reaction Cleavage of peptide bonds with very broad specificity.. The proteasome is a multicatalytic proteinase complex which is characterized by its ability to cleave peptides with Arg, Phe, Tyr, Leu, and Glu adjacent to the leaving group at neutral or slightly basic pH. The proteasome has an ATP-dependent proteolytic activity. This subunit is involved in antigen processing to generate class I binding peptides. This Mus platythrix (Flat-haired mouse) protein is Proteasome subunit beta type-9 (Psmb9).